Reading from the N-terminus, the 89-residue chain is uncharacterized protein (89 aa).

Residue Met-1 is a topological domain, cytoplasmic. A helical membrane pass occupies residues 2-22 (LFEIIYIVSSLFYIVSIIYTL). Over 23-89 (MRIKHINTVA…ELKKSKLCEG (67 aa)) the chain is Extracellular.

It is found in the host membrane. This is an uncharacterized protein from Sulfolobus islandicus filamentous virus (isolate Iceland/Hveragerdi) (SIFV).